Reading from the N-terminus, the 106-residue chain is UPF0145 protein Tlet_1264 (106 aa).

Belongs to the UPF0145 family.

This is UPF0145 protein Tlet_1264 from Pseudothermotoga lettingae (strain ATCC BAA-301 / DSM 14385 / NBRC 107922 / TMO) (Thermotoga lettingae).